Reading from the N-terminus, the 172-residue chain is Large ribosomal subunit protein uL10 (172 aa).

The protein belongs to the universal ribosomal protein uL10 family. As to quaternary structure, part of the ribosomal stalk of the 50S ribosomal subunit. The N-terminus interacts with L11 and the large rRNA to form the base of the stalk. The C-terminus forms an elongated spine to which L12 dimers bind in a sequential fashion forming a multimeric L10(L12)X complex.

In terms of biological role, forms part of the ribosomal stalk, playing a central role in the interaction of the ribosome with GTP-bound translation factors. The chain is Large ribosomal subunit protein uL10 (rplJ) from Liberibacter africanus (Citrus greening disease).